A 120-amino-acid polypeptide reads, in one-letter code: Guanidine hydrolase-activating protein A (120 aa).

3 residues coordinate Ni(2+): histidine 2, glutamate 3, and glutamate 41. Positions 74, 77, 91, and 94 each coordinate Zn(2+).

Belongs to the HypA/HybF family.

Its function is as follows. Involved in the maturation of the nickel-dependent guanidine hydrolase GdmH. Required for nickel insertion into the metal center of GdmH. Seems to be required only for GdmH activation and not for activity. In Synechocystis sp. (strain ATCC 27184 / PCC 6803 / Kazusa), this protein is Guanidine hydrolase-activating protein A.